The chain runs to 205 residues: Small ribosomal subunit protein uS4 (205 aa).

The tract at residues 18-45 (NIWGRPKSPVNRREYGPGQHGQRRKGKL) is disordered. An S4 RNA-binding domain is found at 94–157 (RRLDTVVYRA…KQLAFVLEAS (64 aa)).

It belongs to the universal ribosomal protein uS4 family. In terms of assembly, part of the 30S ribosomal subunit. Contacts protein S5. The interaction surface between S4 and S5 is involved in control of translational fidelity.

One of the primary rRNA binding proteins, it binds directly to 16S rRNA where it nucleates assembly of the body of the 30S subunit. Functionally, with S5 and S12 plays an important role in translational accuracy. This is Small ribosomal subunit protein uS4 from Rhodopseudomonas palustris (strain BisA53).